The following is a 614-amino-acid chain: Zinc finger protein 276 (614 aa).

A disordered region spans residues 1 to 46 (MKRDRLGRFLSPGIARQRGGSGGGCGSGRTRGRPSRSGGTSADGAA). The span at 19–29 (GGSGGGCGSGR) shows a compositional bias: gly residues. One can recognise a ZAD domain in the interval 78–164 (GHCRLCHGKF…LQRVNVSPAG (87 aa)). 4 residues coordinate Zn(2+): C80, C83, C137, and C140. Residues 271 to 422 (RLAQNSESNP…PGPKPGWKKK (152 aa)) are disordered. 2 stretches are compositionally biased toward polar residues: residues 272-282 (LAQNSESNPTG) and 291-302 (RETQVGSETKTL). The segment covering 357–369 (SDLSEGDFLSEDE) has biased composition (acidic residues). Residues 386–408 (YPEKKVSGKKSEGREAKRPEEPK) are compositionally biased toward basic and acidic residues. Residues 409–422 (IRKKPGPKPGWKKK) are compositionally biased toward basic residues. 5 C2H2-type zinc fingers span residues 434 to 458 (YKCPYQGCTAVYRGADGMKKHIKEH), 465 to 490 (RPCPHPGCNKVFMIDRYLQRHVKLIH), 496 to 518 (YICDECGQTFKQRKHLLVHQMRH), 524 to 546 (LQCEVCGFQCRQRASLKYHMTKH), and 554 to 577 (FACDQCGRRFEKAHNLNVHMSMVH). Residues 588 to 614 (PLEAEPPPGPLSPSGTMEGQAVKPEPT) are disordered.

Found in all the examined tissues, with highest levels in kidney, liver, lung, and spleen.

Its subcellular location is the nucleus. It is found in the chromosome. It localises to the centromere. The protein resides in the kinetochore. Its function is as follows. May be involved in transcriptional regulation. The sequence is that of Zinc finger protein 276 (Znf276) from Mus musculus (Mouse).